A 355-amino-acid polypeptide reads, in one-letter code: 3-dehydroquinate synthase (355 aa).

NAD(+) is bound by residues 71 to 76 (EGEASK), 105 to 109 (GVVGD), 129 to 130 (TS), lysine 142, and lysine 151. Positions 184, 246, and 263 each coordinate Zn(2+).

The protein belongs to the sugar phosphate cyclases superfamily. Dehydroquinate synthase family. Co(2+) serves as cofactor. Zn(2+) is required as a cofactor. Requires NAD(+) as cofactor.

The protein localises to the cytoplasm. The enzyme catalyses 7-phospho-2-dehydro-3-deoxy-D-arabino-heptonate = 3-dehydroquinate + phosphate. Its pathway is metabolic intermediate biosynthesis; chorismate biosynthesis; chorismate from D-erythrose 4-phosphate and phosphoenolpyruvate: step 2/7. Functionally, catalyzes the conversion of 3-deoxy-D-arabino-heptulosonate 7-phosphate (DAHP) to dehydroquinate (DHQ). The polypeptide is 3-dehydroquinate synthase (Streptococcus sanguinis (strain SK36)).